The chain runs to 122 residues: Large ribosomal subunit protein uL14 (122 aa).

The protein belongs to the universal ribosomal protein uL14 family. As to quaternary structure, part of the 50S ribosomal subunit. Forms a cluster with proteins L3 and L19. In the 70S ribosome, L14 and L19 interact and together make contacts with the 16S rRNA in bridges B5 and B8.

In terms of biological role, binds to 23S rRNA. Forms part of two intersubunit bridges in the 70S ribosome. The polypeptide is Large ribosomal subunit protein uL14 (Helicobacter acinonychis (strain Sheeba)).